Consider the following 458-residue polypeptide: Argininosuccinate lyase (458 aa).

Belongs to the lyase 1 family. Argininosuccinate lyase subfamily.

It is found in the cytoplasm. It catalyses the reaction 2-(N(omega)-L-arginino)succinate = fumarate + L-arginine. The protein operates within amino-acid biosynthesis; L-arginine biosynthesis; L-arginine from L-ornithine and carbamoyl phosphate: step 3/3. This Lachnospira eligens (strain ATCC 27750 / DSM 3376 / VPI C15-48 / C15-B4) (Eubacterium eligens) protein is Argininosuccinate lyase.